A 167-amino-acid chain; its full sequence is Biotin carboxyl carrier protein of acetyl-CoA carboxylase (167 aa).

Residues 53–91 (SGFSQERPIPTDPKKDTIKETTTENSETSTTTSSGDFIS) are disordered. Over residues 64–74 (DPKKDTIKETT) the composition is skewed to basic and acidic residues. The segment covering 75–86 (TENSETSTTTSS) has biased composition (low complexity). A Biotinyl-binding domain is found at 87–163 (GDFISSPLVG…QFGSKLFRIA (77 aa)). K129 carries the post-translational modification N6-biotinyllysine.

In terms of assembly, homodimer.

Its pathway is lipid metabolism; fatty acid biosynthesis. In terms of biological role, this protein is a component of the acetyl coenzyme A carboxylase complex; first, biotin carboxylase catalyzes the carboxylation of the carrier protein and then the transcarboxylase transfers the carboxyl group to form malonyl-CoA. The polypeptide is Biotin carboxyl carrier protein of acetyl-CoA carboxylase (accB) (Chlamydia pneumoniae (Chlamydophila pneumoniae)).